The following is a 390-amino-acid chain: Centrosomal protein of 44 kDa (390 aa).

Residues 11-195 (RNLEQVLRLL…ISEDTLSPIT (185 aa)) are binds with microtubules and centrioles. The stretch at 233 to 269 (EITALQTMLAECQENLKKLTSIEKRLDCLEQKMKGKV) forms a coiled coil. The disordered stretch occupies residues 322 to 348 (RKSEVERPASIPLSSGYSTASSDSTPR). Phosphoserine occurs at positions 331 and 345. Residues 335 to 345 (SSGYSTASSDS) are compositionally biased toward low complexity. Position 346 is a phosphothreonine (Thr346). Residues 361–385 (SEETTIQKMERMKKMFEETAELLKC) are a coiled coil.

Interacts with CROCC. Interacts with POC1B; the interaction is direct and recruits POC1B to centriolar microtubules. Binds to centriolar microtubules.

It localises to the cytoplasm. It is found in the cytoskeleton. The protein resides in the microtubule organizing center. The protein localises to the centrosome. Its subcellular location is the centriole. It localises to the spindle pole. It is found in the midbody. Its function is as follows. Centriole-enriched microtubule-binding protein involved in centriole biogenesis. In collaboration with CEP295 and POC1B, is required for the centriole-to-centrosome conversion by ensuring the formation of bona fide centriole wall. Functions as a linker component that maintains centrosome cohesion. Associates with CROCC and regulates its stability and localization to the centrosome. In Homo sapiens (Human), this protein is Centrosomal protein of 44 kDa (CEP44).